Here is a 222-residue protein sequence, read N- to C-terminus: Methylthioribulose-1-phosphate dehydratase (222 aa).

Residues His-94 and His-96 each contribute to the Zn(2+) site.

This sequence belongs to the aldolase class II family. MtnB subfamily. Zn(2+) is required as a cofactor.

The enzyme catalyses 5-(methylsulfanyl)-D-ribulose 1-phosphate = 5-methylsulfanyl-2,3-dioxopentyl phosphate + H2O. It functions in the pathway amino-acid biosynthesis; L-methionine biosynthesis via salvage pathway; L-methionine from S-methyl-5-thio-alpha-D-ribose 1-phosphate: step 2/6. Functionally, catalyzes the dehydration of methylthioribulose-1-phosphate (MTRu-1-P) into 2,3-diketo-5-methylthiopentyl-1-phosphate (DK-MTP-1-P). The sequence is that of Methylthioribulose-1-phosphate dehydratase from Yersinia pseudotuberculosis serotype O:1b (strain IP 31758).